We begin with the raw amino-acid sequence, 271 residues long: Catechol O-methyltransferase (271 aa).

The Cytoplasmic portion of the chain corresponds to 1 to 6; it reads MPEAPP. The helical; Signal-anchor for type II membrane protein transmembrane segment at 7-26 threads the bilayer; the sequence is LLLAAVLLGLVLLVVLLLLL. Residues 27 to 271 are Extracellular-facing; that stretch reads RHWGWGLCLI…YKGPGSEAGP (245 aa). S-adenosyl-L-methionine is bound by residues valine 92, glutamate 114, serine 122, glutamate 140, isoleucine 141, 167–170, serine 169, and aspartate 191; that span reads GASQ. Aspartate 191 lines the Mg(2+) pocket. Lysine 194 contacts substrate. Positions 219 and 220 each coordinate Mg(2+). Substrate is bound by residues asparagine 220 and glutamate 249. Serine 267 is modified (phosphoserine).

The protein belongs to the class I-like SAM-binding methyltransferase superfamily. Cation-dependent O-methyltransferase family. The cofactor is Mg(2+). The N-terminus is blocked. In terms of tissue distribution, brain, liver, placenta, lymphocytes and erythrocytes.

The protein resides in the cytoplasm. It is found in the cell membrane. It catalyses the reaction a catechol + S-adenosyl-L-methionine = a guaiacol + S-adenosyl-L-homocysteine + H(+). The enzyme catalyses 2-hydroxyestrone + S-adenosyl-L-methionine = 2-hydroxy-3-methoxy-estrone + S-adenosyl-L-homocysteine + H(+). The catalysed reaction is 4-hydroxyestrone + S-adenosyl-L-methionine = 4-methoxyestrone + S-adenosyl-L-homocysteine + H(+). It carries out the reaction 2-hydroxyestrone + S-adenosyl-L-methionine = 2-methoxyestrone + S-adenosyl-L-homocysteine + H(+). It catalyses the reaction 4-hydroxy-17beta-estradiol + S-adenosyl-L-methionine = 4-methoxy-17beta-estradiol + S-adenosyl-L-homocysteine + H(+). The enzyme catalyses 2-hydroxy-17beta-estradiol + S-adenosyl-L-methionine = 2-hydroxy-3-methoxy-17beta-estradiol + S-adenosyl-L-homocysteine + H(+). The catalysed reaction is 2-hydroxy-17beta-estradiol + S-adenosyl-L-methionine = 2-methoxy-17beta-estradiol + S-adenosyl-L-homocysteine + H(+). In terms of biological role, catalyzes the O-methylation, and thereby the inactivation, of catecholamine neurotransmitters and catechol hormones. Also shortens the biological half-lives of certain neuroactive drugs, like L-DOPA, alpha-methyl DOPA and isoproterenol. This Homo sapiens (Human) protein is Catechol O-methyltransferase.